A 317-amino-acid polypeptide reads, in one-letter code: Anamorsin homolog 2 (317 aa).

Residues 1 to 162 (MAKKVGVLLF…KPSWDSASVF (162 aa)) are N-terminal SAM-like domain. Residues 163-229 (QLRKGSSQKG…EDDLLTEEDL (67 aa)) form a linker region. 4 residues coordinate [2Fe-2S] cluster: C240, C247, C250, and C252. A fe-S binding site A region spans residues 240-252 (CAPTKKACKNCTC). C278, C281, C289, and C292 together coordinate [4Fe-4S] cluster. Short sequence motifs (cx2C motif) lie at residues 278–281 (CGSC) and 289–292 (CAGC). Residues 278–292 (CGSCGLGDAFRCAGC) are fe-S binding site B.

It belongs to the anamorsin family. In terms of assembly, monomer. [2Fe-2S] cluster serves as cofactor. It depends on [4Fe-4S] cluster as a cofactor.

It localises to the cytoplasm. The protein resides in the mitochondrion intermembrane space. Functionally, component of the cytosolic iron-sulfur (Fe-S) protein assembly (CIA) machinery. Required for the maturation of extramitochondrial Fe-S proteins. Part of an electron transfer chain functioning in an early step of cytosolic Fe-S biogenesis, facilitating the de novo assembly of a [4Fe-4S] cluster on the cytosolic Fe-S scaffold complex. Electrons are transferred from NADPH via a FAD- and FMN-containing diflavin oxidoreductase. Together with the diflavin oxidoreductase, also required for the assembly of the diferric tyrosyl radical cofactor of ribonucleotide reductase (RNR), probably by providing electrons for reduction during radical cofactor maturation in the catalytic small subunit. The sequence is that of Anamorsin homolog 2 from Physcomitrium patens (Spreading-leaved earth moss).